A 59-amino-acid chain; its full sequence is Small ribosomal subunit protein bS21 (59 aa).

The interval 40-59 (KPSIKKRAKSKAALKYKKQR) is disordered.

Belongs to the bacterial ribosomal protein bS21 family.

The sequence is that of Small ribosomal subunit protein bS21 from Protochlamydia amoebophila (strain UWE25).